The primary structure comprises 458 residues: tRNA modification GTPase MnmE (458 aa).

Arg-22, Glu-84, and Arg-123 together coordinate (6S)-5-formyl-5,6,7,8-tetrahydrofolate. The TrmE-type G domain occupies 220–379 (GIATAIIGRP…LETAIADLFF (160 aa)). Residue Asn-230 participates in K(+) binding. GTP is bound by residues 230–235 (NVGKSS), 249–255 (TDIAGTT), and 274–277 (DTAG). Ser-234 contributes to the Mg(2+) binding site. K(+) is bound by residues Thr-249, Ile-251, and Thr-254. Thr-255 is a Mg(2+) binding site. Lys-458 lines the (6S)-5-formyl-5,6,7,8-tetrahydrofolate pocket.

Belongs to the TRAFAC class TrmE-Era-EngA-EngB-Septin-like GTPase superfamily. TrmE GTPase family. As to quaternary structure, homodimer. Heterotetramer of two MnmE and two MnmG subunits. The cofactor is K(+).

The protein localises to the cytoplasm. Its function is as follows. Exhibits a very high intrinsic GTPase hydrolysis rate. Involved in the addition of a carboxymethylaminomethyl (cmnm) group at the wobble position (U34) of certain tRNAs, forming tRNA-cmnm(5)s(2)U34. The chain is tRNA modification GTPase MnmE from Bacillus cereus (strain ATCC 10987 / NRS 248).